An 85-amino-acid chain; its full sequence is Large ribosomal subunit protein bL27 (85 aa).

The interval 1 to 21 is disordered; the sequence is MAHKKAGGSSRNGRDSEGRRL.

Belongs to the bacterial ribosomal protein bL27 family.

This is Large ribosomal subunit protein bL27 from Rhodospirillum rubrum (strain ATCC 11170 / ATH 1.1.1 / DSM 467 / LMG 4362 / NCIMB 8255 / S1).